Consider the following 352-residue polypeptide: tRNA pseudouridine synthase D (352 aa).

The active-site Nucleophile is aspartate 81. The region spanning glycine 157 to leucine 303 is the TRUD domain.

This sequence belongs to the pseudouridine synthase TruD family.

It catalyses the reaction uridine(13) in tRNA = pseudouridine(13) in tRNA. Functionally, responsible for synthesis of pseudouridine from uracil-13 in transfer RNAs. The sequence is that of tRNA pseudouridine synthase D from Pseudomonas syringae pv. syringae (strain B728a).